A 436-amino-acid polypeptide reads, in one-letter code: Xylose isomerase (436 aa).

Active-site residues include His100 and Asp103. Residues Glu231, Glu267, His270, Asp295, Asp306, Asp308, and Asp338 each contribute to the Mg(2+) site.

This sequence belongs to the xylose isomerase family. Homotetramer. The cofactor is Mg(2+).

It localises to the cytoplasm. It carries out the reaction alpha-D-xylose = alpha-D-xylulofuranose. This Rhizobium etli (strain CIAT 652) protein is Xylose isomerase.